A 288-amino-acid chain; its full sequence is Dichloromethane dehalogenase (288 aa).

A GST N-terminal domain is found at 12–94 (KTLRLLYHPA…YVNEKFDGAG (83 aa)). Positions 100–252 (GTQERAQINQ…ASMFKRKTAV (153 aa)) constitute a GST C-terminal domain.

Belongs to the GST superfamily. As to quaternary structure, homohexamer.

It localises to the cytoplasm. The catalysed reaction is dichloromethane + H2O = formaldehyde + 2 chloride + 2 H(+). It functions in the pathway xenobiotic degradation; dichloromethane degradation. The protein is Dichloromethane dehalogenase (dcmA) of Methylorubrum extorquens (strain DSM 6343 / CIP 106787 / DM4) (Methylobacterium extorquens).